Reading from the N-terminus, the 194-residue chain is MTIKLIVGLANPGAEYAATRHNAGAWYVDFLAERLRAPLREEPKFFGYTSRINLEGEDVRLLVPTTFMNLSGKAVAAMASFYRINPDEILVAHDELDLPPGVAKFKLGGGHGGHNGLKDIISKLGNNPNFHRLRIGIGHPGDKNKVVGFVLGKPPVTEQKLIDEAIDEAARCTEVWFKEGLAKATSRLHTFKAQ.

Y16 lines the tRNA pocket. Catalysis depends on H21, which acts as the Proton acceptor. TRNA-binding residues include F67, N69, and N115.

Belongs to the PTH family. In terms of assembly, monomer.

It is found in the cytoplasm. It catalyses the reaction an N-acyl-L-alpha-aminoacyl-tRNA + H2O = an N-acyl-L-amino acid + a tRNA + H(+). Functionally, hydrolyzes ribosome-free peptidyl-tRNAs (with 1 or more amino acids incorporated), which drop off the ribosome during protein synthesis, or as a result of ribosome stalling. Catalyzes the release of premature peptidyl moieties from peptidyl-tRNA molecules trapped in stalled 50S ribosomal subunits, and thus maintains levels of free tRNAs and 50S ribosomes. The polypeptide is Peptidyl-tRNA hydrolase (Escherichia fergusonii (strain ATCC 35469 / DSM 13698 / CCUG 18766 / IAM 14443 / JCM 21226 / LMG 7866 / NBRC 102419 / NCTC 12128 / CDC 0568-73)).